Consider the following 128-residue polypeptide: Small ribosomal subunit protein eS8 (128 aa).

Belongs to the eukaryotic ribosomal protein eS8 family. In terms of assembly, part of the 30S ribosomal subunit.

This chain is Small ribosomal subunit protein eS8, found in Methanococcus maripaludis (strain DSM 14266 / JCM 13030 / NBRC 101832 / S2 / LL).